A 135-amino-acid polypeptide reads, in one-letter code: Membrane-anchored ubiquitin-fold protein 4 (135 aa).

Residues 1 to 20 (MAEKEEGKVAAEGGAEAEAD) are disordered. The Ubiquitin-like domain maps to 23-92 (VEVKFRLFDG…NDKNIAQCRA (70 aa)). Cysteine 132 is subject to Cysteine methyl ester. A lipid anchor (S-geranylgeranyl cysteine) is attached at cysteine 132. Residues 133–135 (TIL) constitute a propeptide, removed in mature form.

It is found in the cell membrane. In terms of biological role, may serve as docking site to facilitate the association of other proteins to the plasma membrane. In Oryza sativa subsp. japonica (Rice), this protein is Membrane-anchored ubiquitin-fold protein 4 (MUB4).